The primary structure comprises 346 residues: Cell division protein FtsZ 2 (346 aa).

Residues 23–27, 110–112, Glu-141, Arg-145, and Asp-189 each bind GTP; these read GGGGN and GTG. The interval 320 to 346 is disordered; the sequence is SNRSAQPTAPEAMNGQTAAAVPSRTLQ.

The protein belongs to the FtsZ family. In terms of assembly, homodimer. Polymerizes to form a dynamic ring structure in a strictly GTP-dependent manner. Interacts directly with several other division proteins.

It localises to the cytoplasm. Essential cell division protein that forms a contractile ring structure (Z ring) at the future cell division site. The regulation of the ring assembly controls the timing and the location of cell division. One of the functions of the FtsZ ring is to recruit other cell division proteins to the septum to produce a new cell wall between the dividing cells. Binds GTP and shows GTPase activity. The polypeptide is Cell division protein FtsZ 2 (Rhizobium meliloti (strain 1021) (Ensifer meliloti)).